The following is a 359-amino-acid chain: Nicotinate-nucleotide--dimethylbenzimidazole phosphoribosyltransferase (359 aa).

The active-site Proton acceptor is the E318.

The protein belongs to the CobT family. Homodimer.

The enzyme catalyses 5,6-dimethylbenzimidazole + nicotinate beta-D-ribonucleotide = alpha-ribazole 5'-phosphate + nicotinate + H(+). It functions in the pathway nucleoside biosynthesis; alpha-ribazole biosynthesis; alpha-ribazole from 5,6-dimethylbenzimidazole: step 1/2. Functionally, catalyzes the synthesis of alpha-ribazole-5'-phosphate from nicotinate mononucleotide (NAMN) and 5,6-dimethylbenzimidazole (DMB). In Escherichia coli O9:H4 (strain HS), this protein is Nicotinate-nucleotide--dimethylbenzimidazole phosphoribosyltransferase.